A 132-amino-acid chain; its full sequence is Interleukin-5 (132 aa).

Residues 1-19 (MRMLLHLSILTLACVWTFA) form the signal peptide. N45, N74, and N88 each carry an N-linked (GlcNAc...) asparagine glycan.

Belongs to the IL-5 family. In terms of assembly, homodimer; disulfide-linked. Interacts with IL5RA. Interacts with CSF2RB.

It is found in the secreted. Its function is as follows. Homodimeric cytokine expressed predominantly by T-lymphocytes and NK cells that plays an important role in the survival, differentiation, and chemotaxis of eosinophils. Also acts on activated and resting B-cells to induce immunoglobulin production, growth, and differentiation. Mechanistically, exerts its biological effects through a receptor composed of IL5RA subunit and the cytokine receptor common subunit beta/CSF2RB. Binding to the receptor leads to activation of various kinases including LYN, SYK and JAK2 and thereby propagates signals through the RAS-MAPK and JAK-STAT5 pathways respectively. This Sigmodon hispidus (Hispid cotton rat) protein is Interleukin-5 (IL5).